The primary structure comprises 250 residues: Urease accessory protein UreD (250 aa).

Belongs to the UreD family. UreD, UreF and UreG form a complex that acts as a GTP-hydrolysis-dependent molecular chaperone, activating the urease apoprotein by helping to assemble the nickel containing metallocenter of UreC. The UreE protein probably delivers the nickel.

It is found in the cytoplasm. In terms of biological role, required for maturation of urease via the functional incorporation of the urease nickel metallocenter. The protein is Urease accessory protein UreD of Aliarcobacter butzleri (strain RM4018) (Arcobacter butzleri).